The primary structure comprises 330 residues: Putative aminopeptidase (330 aa).

Residues H65 and D168 each contribute to the a divalent metal cation site. The active-site Proton acceptor is E198. Residues E199, D221, and H307 each contribute to the a divalent metal cation site.

The protein belongs to the peptidase M42 family. A divalent metal cation serves as cofactor.

This Acetivibrio thermocellus (Hungateiclostridium thermocellum) protein is Putative aminopeptidase (celM).